The following is a 416-amino-acid chain: UDP-N-acetylmuramoylalanine--D-glutamate ligase (416 aa).

104–110 lines the ATP pocket; the sequence is GSNGKST.

This sequence belongs to the MurCDEF family.

The protein localises to the cytoplasm. It catalyses the reaction UDP-N-acetyl-alpha-D-muramoyl-L-alanine + D-glutamate + ATP = UDP-N-acetyl-alpha-D-muramoyl-L-alanyl-D-glutamate + ADP + phosphate + H(+). It participates in cell wall biogenesis; peptidoglycan biosynthesis. Its function is as follows. Cell wall formation. Catalyzes the addition of glutamate to the nucleotide precursor UDP-N-acetylmuramoyl-L-alanine (UMA). This Francisella tularensis subsp. tularensis (strain WY96-3418) protein is UDP-N-acetylmuramoylalanine--D-glutamate ligase.